The primary structure comprises 95 residues: Small ribosomal subunit protein bS6 (95 aa).

Belongs to the bacterial ribosomal protein bS6 family.

Functionally, binds together with bS18 to 16S ribosomal RNA. The sequence is that of Small ribosomal subunit protein bS6 from Corynebacterium efficiens (strain DSM 44549 / YS-314 / AJ 12310 / JCM 11189 / NBRC 100395).